The primary structure comprises 463 residues: Phosphoglucosamine mutase (463 aa).

Residue serine 108 is the Phosphoserine intermediate of the active site. The Mg(2+) site is built by serine 108, aspartate 247, aspartate 249, and aspartate 251. Serine 108 is subject to Phosphoserine.

Belongs to the phosphohexose mutase family. Mg(2+) serves as cofactor. In terms of processing, activated by phosphorylation.

It carries out the reaction alpha-D-glucosamine 1-phosphate = D-glucosamine 6-phosphate. Catalyzes the conversion of glucosamine-6-phosphate to glucosamine-1-phosphate. This is Phosphoglucosamine mutase from Nitrosospira multiformis (strain ATCC 25196 / NCIMB 11849 / C 71).